Consider the following 241-residue polypeptide: Major prion protein (241 aa).

Positions 1–15 are cleaved as a signal peptide; the sequence is MLVLFVATWSDLGLC. An interaction with ADGRG6 region spans residues 16–31; sequence KKRPKPGGWNTGGSRY. An interaction with GRB2, ERI3 and SYN1 region spans residues 16-223; sequence KKRPKPGGWN…ESQAYYQRGS (208 aa). The interval 18–101 is disordered; that stretch reads RPKPGGWNTG…WHKPNKPKTS (84 aa). A run of 5 repeats spans residues 44-52, 53-60, 61-68, 69-76, and 77-84. The 5 X 8 AA tandem repeats of P-H-G-G-G-W-G-Q stretch occupies residues 44–84; the sequence is PQGGGGWGQPHGGGWGQPHGGGWGQPHGGGWGQPHGGGWGQ. Positions 45–88 are enriched in gly residues; sequence QGGGGWGQPHGGGWGQPHGGGWGQPHGGGWGQPHGGGWGQGGGT. Positions 54, 55, 56, 62, 63, 64, 70, 71, 72, 78, 79, and 80 each coordinate Cu(2+). Basic residues predominate over residues 91–101; it reads QWHKPNKPKTS. Residues Cys-172 and Cys-207 are joined by a disulfide bond. Residues Asn-174 and Asn-190 are each glycosylated (N-linked (GlcNAc...) asparagine). The GPI-anchor amidated serine moiety is linked to residue Ser-223. The propeptide at 224-241 is removed in mature form; that stretch reads SMVLFSSPPVILLISFLI.

The protein belongs to the prion family. Monomer and homodimer. Has a tendency to aggregate into amyloid fibrils containing a cross-beta spine, formed by a steric zipper of superposed beta-strands. Soluble oligomers may represent an intermediate stage on the path to fibril formation. Copper binding may promote oligomerization. Interacts with GRB2, APP, ERI3/PRNPIP and SYN1. Mislocalized cytosolically exposed PrP interacts with MGRN1; this interaction alters MGRN1 subcellular location and causes lysosomal enlargement. Interacts with APP. Interacts with KIAA1191. Interacts with ADGRG6.

Its subcellular location is the cell membrane. The protein resides in the golgi apparatus. Its primary physiological function is unclear. May play a role in neuronal development and synaptic plasticity. May be required for neuronal myelin sheath maintenance. May promote myelin homeostasis through acting as an agonist for ADGRG6 receptor. May play a role in iron uptake and iron homeostasis. Soluble oligomers are toxic to cultured neuroblastoma cells and induce apoptosis (in vitro). Association with GPC1 (via its heparan sulfate chains) targets PRNP to lipid rafts. Also provides Cu(2+) or Zn(2+) for the ascorbate-mediated GPC1 deaminase degradation of its heparan sulfate side chains. The protein is Major prion protein (PRNP) of Mandrillus sphinx (Mandrill).